Reading from the N-terminus, the 407-residue chain is S-adenosylmethionine synthase (407 aa).

His-15 is an ATP binding site. Asp-17 is a Mg(2+) binding site. Glu-43 lines the K(+) pocket. L-methionine contacts are provided by Glu-56 and Gln-99. The segment at Gln-99 to Thr-109 is flexible loop. The tract at residues Glu-112–Gly-131 is disordered. ATP is bound by residues Asp-179–Lys-181, Arg-252–Phe-253, Asp-261, Arg-267–Lys-268, Ala-284, and Lys-288. An L-methionine-binding site is contributed by Asp-261. Residue Lys-292 coordinates L-methionine.

Belongs to the AdoMet synthase family. As to quaternary structure, homotetramer; dimer of dimers. The cofactor is Mg(2+). K(+) serves as cofactor.

The protein localises to the cytoplasm. It carries out the reaction L-methionine + ATP + H2O = S-adenosyl-L-methionine + phosphate + diphosphate. It functions in the pathway amino-acid biosynthesis; S-adenosyl-L-methionine biosynthesis; S-adenosyl-L-methionine from L-methionine: step 1/1. Functionally, catalyzes the formation of S-adenosylmethionine (AdoMet) from methionine and ATP. The overall synthetic reaction is composed of two sequential steps, AdoMet formation and the subsequent tripolyphosphate hydrolysis which occurs prior to release of AdoMet from the enzyme. The chain is S-adenosylmethionine synthase from Streptomyces fradiae (Streptomyces roseoflavus).